We begin with the raw amino-acid sequence, 119 residues long: Parathyroid hormone (119 aa).

A signal peptide spans 1-25; the sequence is MTSTKNLAKAIVILYAICFFTNSDG. A propeptide spanning residues 26–31 is cleaved from the precursor; sequence RPMMKR.

It belongs to the parathyroid hormone family. As to quaternary structure, interacts with PTH1R (via N-terminal extracellular domain).

Its subcellular location is the secreted. Parathyroid hormone elevates calcium level by dissolving the salts in bone and preventing their renal excretion. Acts by binding to its receptor, PTH1R, activating G protein-coupled receptor signaling. Stimulates [1-14C]-2-deoxy-D-glucose (2DG) transport and glycogen synthesis in osteoblastic cells. This chain is Parathyroid hormone, found in Gallus gallus (Chicken).